Consider the following 567-residue polypeptide: uncharacterized protein (567 aa).

Helical transmembrane passes span 136–156, 159–179, 193–213, 217–237, 258–278, 291–311, 334–354, 364–384, 393–415, 426–446, 457–477, and 536–553; these read LFCLGCLWCYFSSGMVSLIFA, FMGIGGGGLITLSTIINSDII, LLLGFGAICGASFGGVLSEVF, LCFLVQVPFSVLSIAVGFFFV, ILGGLLLVSGLTSLLLVLTFG, LLLLLGILCIVAFVYVESITE, FLIGLAGYAYLFTLPLFFQLV, LRLALPSLSTPIGGLICGILM, LLFSGVFLMSLGYFLSLFIHPGI, PANVGQGIGFPSSLFSFIFAF, TLYLIRSIGSLFGVGGLSAVI, and AQQFTTICCVLALGLCIL.

The protein belongs to the major facilitator superfamily.

The protein resides in the membrane. This is an uncharacterized protein from Schizosaccharomyces pombe (strain 972 / ATCC 24843) (Fission yeast).